Consider the following 353-residue polypeptide: Draxin-B (353 aa).

The first 21 residues, Met-1 to Ser-21, serve as a signal peptide directing secretion. Disordered stretches follow at residues Glu-23–Ser-183, Thr-198–Val-222, and Val-246–Val-268. Residues Gly-138–Lys-167 are compositionally biased toward basic residues. A compositionally biased stretch (basic residues) spans Ser-252–Lys-261. Residues Asn-262 and Asn-267 are each glycosylated (N-linked (GlcNAc...) asparagine).

It belongs to the draxin family.

Its subcellular location is the secreted. In terms of biological role, chemorepulsive axon guidance protein required for the development of spinal cord and forebrain commissures. Acts as a chemorepulsive guidance protein for commissural axons during development. Able to inhibit or repel neurite outgrowth from dorsal spinal cord. The polypeptide is Draxin-B (draxin-B) (Salmo salar (Atlantic salmon)).